The following is a 418-amino-acid chain: Actin-related protein 3-A (418 aa).

It belongs to the actin family. ARP3 subfamily. In terms of assembly, component of the Arp2/3 complex composed of actr2/arp2, actr3/arp3, arpc1 (arpc1a or arpc1b), arpc2, arpc3, arpc4 and arpc5.

It localises to the cytoplasm. It is found in the cytoskeleton. The protein localises to the cell projection. Its subcellular location is the nucleus. In terms of biological role, ATP-binding component of the Arp2/3 complex, a multiprotein complex that mediates actin polymerization upon stimulation by nucleation-promoting factor (NPF). The Arp2/3 complex mediates the formation of branched actin networks in the cytoplasm, providing the force for cell motility. Seems to contact the pointed end of the daughter actin filament. In addition to its role in the cytoplasmic cytoskeleton, the Arp2/3 complex also promotes actin polymerization in the nucleus, thereby regulating gene transcription and repair of damaged DNA. The Arp2/3 complex promotes homologous recombination (HR) repair in response to DNA damage by promoting nuclear actin polymerization, leading to drive motility of double-strand breaks (DSBs). The protein is Actin-related protein 3-A of Xenopus laevis (African clawed frog).